A 56-amino-acid chain; its full sequence is UPF0434 protein WIGBR2520 (56 aa).

The protein belongs to the UPF0434 family.

The protein is UPF0434 protein WIGBR2520 of Wigglesworthia glossinidia brevipalpis.